Reading from the N-terminus, the 355-residue chain is Probable dual-specificity RNA methyltransferase RlmN (355 aa).

The Proton acceptor role is filled by glutamate 92. The region spanning 98–330 is the Radical SAM core domain; the sequence is FHYGLSVCVT…TELGINCGVR (233 aa). Cysteines 105 and 341 form a disulfide. Positions 112, 116, and 119 each coordinate [4Fe-4S] cluster. S-adenosyl-L-methionine is bound by residues 164-165, serine 196, 219-221, and asparagine 297; these read GE and SLH. Catalysis depends on cysteine 341, which acts as the S-methylcysteine intermediate.

It belongs to the radical SAM superfamily. RlmN family. Requires [4Fe-4S] cluster as cofactor.

The protein resides in the cytoplasm. The catalysed reaction is adenosine(2503) in 23S rRNA + 2 reduced [2Fe-2S]-[ferredoxin] + 2 S-adenosyl-L-methionine = 2-methyladenosine(2503) in 23S rRNA + 5'-deoxyadenosine + L-methionine + 2 oxidized [2Fe-2S]-[ferredoxin] + S-adenosyl-L-homocysteine. The enzyme catalyses adenosine(37) in tRNA + 2 reduced [2Fe-2S]-[ferredoxin] + 2 S-adenosyl-L-methionine = 2-methyladenosine(37) in tRNA + 5'-deoxyadenosine + L-methionine + 2 oxidized [2Fe-2S]-[ferredoxin] + S-adenosyl-L-homocysteine. In terms of biological role, specifically methylates position 2 of adenine 2503 in 23S rRNA and position 2 of adenine 37 in tRNAs. This Oceanobacillus iheyensis (strain DSM 14371 / CIP 107618 / JCM 11309 / KCTC 3954 / HTE831) protein is Probable dual-specificity RNA methyltransferase RlmN.